The sequence spans 168 residues: Shikimate kinase (168 aa).

10-15 is a binding site for ATP; it reads CSGKST. Serine 14 contacts Mg(2+). 3 residues coordinate substrate: aspartate 32, arginine 56, and glycine 78. Residue arginine 116 participates in ATP binding. Position 133 (arginine 133) interacts with substrate.

The protein belongs to the shikimate kinase family. In terms of assembly, monomer. Requires Mg(2+) as cofactor.

It is found in the cytoplasm. The catalysed reaction is shikimate + ATP = 3-phosphoshikimate + ADP + H(+). It functions in the pathway metabolic intermediate biosynthesis; chorismate biosynthesis; chorismate from D-erythrose 4-phosphate and phosphoenolpyruvate: step 5/7. Catalyzes the specific phosphorylation of the 3-hydroxyl group of shikimic acid using ATP as a cosubstrate. In Aquifex aeolicus (strain VF5), this protein is Shikimate kinase.